Consider the following 449-residue polypeptide: Phosphoribosylamine--glycine ligase (449 aa).

One can recognise an ATP-grasp domain in the interval 112–325 (RELMEKYDIP…IVTLHASIAE (214 aa)). 139-202 (IDELGKPVAV…EEKCVGEEYT (64 aa)) contacts ATP. Residues Q283, E295, and N297 each contribute to the Mg(2+) site. Residues Q283, E295, and N297 each contribute to the Mn(2+) site.

Belongs to the GARS family. Requires Mg(2+) as cofactor. Mn(2+) serves as cofactor.

It catalyses the reaction 5-phospho-beta-D-ribosylamine + glycine + ATP = N(1)-(5-phospho-beta-D-ribosyl)glycinamide + ADP + phosphate + H(+). It functions in the pathway purine metabolism; IMP biosynthesis via de novo pathway; N(1)-(5-phospho-D-ribosyl)glycinamide from 5-phospho-alpha-D-ribose 1-diphosphate: step 2/2. This Methanopyrus kandleri (strain AV19 / DSM 6324 / JCM 9639 / NBRC 100938) protein is Phosphoribosylamine--glycine ligase.